Here is a 693-residue protein sequence, read N- to C-terminus: Elongation factor G (693 aa).

In terms of domain architecture, tr-type G spans 8 to 284 (HMVRNIGIAA…AVIDYLPAPD (277 aa)). GTP-binding positions include 17 to 24 (AHIDAGKT), 81 to 85 (DTPGH), and 135 to 138 (NKMD).

This sequence belongs to the TRAFAC class translation factor GTPase superfamily. Classic translation factor GTPase family. EF-G/EF-2 subfamily.

The protein resides in the cytoplasm. Its function is as follows. Catalyzes the GTP-dependent ribosomal translocation step during translation elongation. During this step, the ribosome changes from the pre-translocational (PRE) to the post-translocational (POST) state as the newly formed A-site-bound peptidyl-tRNA and P-site-bound deacylated tRNA move to the P and E sites, respectively. Catalyzes the coordinated movement of the two tRNA molecules, the mRNA and conformational changes in the ribosome. The sequence is that of Elongation factor G from Nautilia profundicola (strain ATCC BAA-1463 / DSM 18972 / AmH).